A 34-amino-acid chain; its full sequence is Photosystem II reaction center protein M (34 aa).

The chain crosses the membrane as a helical span at residues 5-25 (ILAFIATALFILIPTAFLLII).

It belongs to the PsbM family. In terms of assembly, PSII is composed of 1 copy each of membrane proteins PsbA, PsbB, PsbC, PsbD, PsbE, PsbF, PsbH, PsbI, PsbJ, PsbK, PsbL, PsbM, PsbT, PsbX, PsbY, PsbZ, Psb30/Ycf12, at least 3 peripheral proteins of the oxygen-evolving complex and a large number of cofactors. It forms dimeric complexes.

The protein resides in the plastid. The protein localises to the chloroplast thylakoid membrane. One of the components of the core complex of photosystem II (PSII). PSII is a light-driven water:plastoquinone oxidoreductase that uses light energy to abstract electrons from H(2)O, generating O(2) and a proton gradient subsequently used for ATP formation. It consists of a core antenna complex that captures photons, and an electron transfer chain that converts photonic excitation into a charge separation. This subunit is found at the monomer-monomer interface. In Lolium perenne (Perennial ryegrass), this protein is Photosystem II reaction center protein M.